We begin with the raw amino-acid sequence, 431 residues long: Glutamate--tRNA ligase 1 (431 aa).

The 'HIGH' region motif lies at 6–16 (PSPTGDMHIGN). The 'KMSKS' region motif lies at 235 to 239 (KMSKR). Residue K238 coordinates ATP.

This sequence belongs to the class-I aminoacyl-tRNA synthetase family. Glutamate--tRNA ligase type 1 subfamily. Monomer.

The protein resides in the cytoplasm. The catalysed reaction is tRNA(Glu) + L-glutamate + ATP = L-glutamyl-tRNA(Glu) + AMP + diphosphate. Functionally, catalyzes the attachment of glutamate to tRNA(Glu) in a two-step reaction: glutamate is first activated by ATP to form Glu-AMP and then transferred to the acceptor end of tRNA(Glu). In Campylobacter curvus (strain 525.92), this protein is Glutamate--tRNA ligase 1.